A 311-amino-acid polypeptide reads, in one-letter code: Salutaridine reductase (311 aa).

17–40 contributes to the NADP(+) binding site; it reads VTGGNKGIGFEICKQLSSSGIMVV. Substrate is bound at residue serine 180. Residue tyrosine 236 is the Proton acceptor of the active site.

It belongs to the short-chain dehydrogenases/reductases (SDR) family.

The enzyme catalyses (7S)-salutaridinol + NADP(+) = salutaridine + NADPH + H(+). With respect to regulation, subject to substrate inhibition at salutaridine concentrations higher than 20 to 30 uM. Its function is as follows. Involved in biosynthesis of morphinan-type benzylisoquinoline alkaloids. Catalyzes the stereospecific conversion of salutaridine to salutaridinol. In Papaver bracteatum (Great scarlet poppy), this protein is Salutaridine reductase.